We begin with the raw amino-acid sequence, 311 residues long: MQRIGMVANLEKPRVRETALDIINYLESRNVRVLISTRKAAALGCPEKGVAEEEVIAAEGLLALGGDGTLLRAARLVAPAGTPILGINLGHLGFLTEIELTELYPALDKLLAGAYRIEERMMLRGTVQRPEKALTCTALNDIVVTKGAFSRMLRLEVYIDTAYLDTYPADGLIVSSPTGSTAYSLSAGGPLVSPQLQVMILTPICPHTLYTRPLVVPGEQEIRVCVHAPGAEVMLTVDGQQGLHLRDGDVIRVTRARTPARLIRLQDNTFYSLVREKLKEGGSRQDDENPAATVNPETDSKYPHSHPGSTG.

Catalysis depends on Asp67, which acts as the Proton acceptor. NAD(+) is bound by residues Asp67 to Gly68, Arg72, Asn140 to Asp141, Arg151, Asp170, Thr181 to Ser186, and Gln240. Residues Leu278–Asp287 are compositionally biased toward basic and acidic residues. The tract at residues Leu278–Gly311 is disordered.

It belongs to the NAD kinase family. A divalent metal cation is required as a cofactor.

The protein localises to the cytoplasm. The enzyme catalyses NAD(+) + ATP = ADP + NADP(+) + H(+). Its function is as follows. Involved in the regulation of the intracellular balance of NAD and NADP, and is a key enzyme in the biosynthesis of NADP. Catalyzes specifically the phosphorylation on 2'-hydroxyl of the adenosine moiety of NAD to yield NADP. This chain is NAD kinase, found in Moorella thermoacetica (strain ATCC 39073 / JCM 9320).